The sequence spans 122 residues: Large ribosomal subunit protein uL14c (122 aa).

It belongs to the universal ribosomal protein uL14 family. As to quaternary structure, part of the 50S ribosomal subunit.

The protein resides in the plastid. It localises to the chloroplast. Its function is as follows. Binds to 23S rRNA. The protein is Large ribosomal subunit protein uL14c of Phaseolus vulgaris (Kidney bean).